Consider the following 720-residue polypeptide: Fatty acid oxidation complex subunit alpha (720 aa).

The segment at 1–189 (MIYQGETLSV…KLGLVDAVVA (189 aa)) is enoyl-CoA hydratase/isomerase. A substrate-binding site is contributed by aspartate 296. Residues 311-720 (QPTKKGVVLG…ESYYTQQVNA (410 aa)) form a 3-hydroxyacyl-CoA dehydrogenase region. Residues methionine 324, aspartate 343, 400–402 (VVE), lysine 407, and serine 429 contribute to the NAD(+) site. The active-site For 3-hydroxyacyl-CoA dehydrogenase activity is the histidine 450. Residue asparagine 453 coordinates NAD(+). Substrate contacts are provided by asparagine 500 and tyrosine 660.

The protein in the N-terminal section; belongs to the enoyl-CoA hydratase/isomerase family. In the C-terminal section; belongs to the 3-hydroxyacyl-CoA dehydrogenase family. As to quaternary structure, heterotetramer of two alpha chains (FadB) and two beta chains (FadA).

It carries out the reaction a (3S)-3-hydroxyacyl-CoA + NAD(+) = a 3-oxoacyl-CoA + NADH + H(+). The catalysed reaction is a (3S)-3-hydroxyacyl-CoA = a (2E)-enoyl-CoA + H2O. The enzyme catalyses a 4-saturated-(3S)-3-hydroxyacyl-CoA = a (3E)-enoyl-CoA + H2O. It catalyses the reaction (3S)-3-hydroxybutanoyl-CoA = (3R)-3-hydroxybutanoyl-CoA. It carries out the reaction a (3Z)-enoyl-CoA = a 4-saturated (2E)-enoyl-CoA. The catalysed reaction is a (3E)-enoyl-CoA = a 4-saturated (2E)-enoyl-CoA. It participates in lipid metabolism; fatty acid beta-oxidation. Functionally, involved in the aerobic and anaerobic degradation of long-chain fatty acids via beta-oxidation cycle. Catalyzes the formation of 3-oxoacyl-CoA from enoyl-CoA via L-3-hydroxyacyl-CoA. It can also use D-3-hydroxyacyl-CoA and cis-3-enoyl-CoA as substrate. The polypeptide is Fatty acid oxidation complex subunit alpha (Photobacterium profundum (strain SS9)).